A 114-amino-acid polypeptide reads, in one-letter code: Hydrogenase maturation factor HypA (114 aa).

Ni(2+) is bound at residue His2. Zn(2+)-binding residues include Cys73, Cys76, Cys89, and Cys92.

It belongs to the HypA/HybF family.

Functionally, involved in the maturation of [NiFe] hydrogenases. Required for nickel insertion into the metal center of the hydrogenase. The polypeptide is Hydrogenase maturation factor HypA (Caldanaerobacter subterraneus subsp. tengcongensis (strain DSM 15242 / JCM 11007 / NBRC 100824 / MB4) (Thermoanaerobacter tengcongensis)).